We begin with the raw amino-acid sequence, 219 residues long: uncharacterized protein (219 aa).

The active site involves Asp-58.

It belongs to the pseudouridine synthase RluA family.

The enzyme catalyses a uridine in RNA = a pseudouridine in RNA. This is an uncharacterized protein from Zymomonas mobilis subsp. mobilis (strain ATCC 31821 / ZM4 / CP4).